A 122-amino-acid chain; its full sequence is Small ribosomal subunit protein uS13 (122 aa).

Residues 99 to 122 (RGQRTHTNARTRKGPAKAIAGKKK) are disordered.

It belongs to the universal ribosomal protein uS13 family. As to quaternary structure, part of the 30S ribosomal subunit. Forms a loose heterodimer with protein S19. Forms two bridges to the 50S subunit in the 70S ribosome.

Its function is as follows. Located at the top of the head of the 30S subunit, it contacts several helices of the 16S rRNA. In the 70S ribosome it contacts the 23S rRNA (bridge B1a) and protein L5 of the 50S subunit (bridge B1b), connecting the 2 subunits; these bridges are implicated in subunit movement. Contacts the tRNAs in the A and P-sites. The protein is Small ribosomal subunit protein uS13 of Bradyrhizobium sp. (strain BTAi1 / ATCC BAA-1182).